We begin with the raw amino-acid sequence, 443 residues long: Chromosomal replication initiator protein DnaA (443 aa).

The interval 1–76 is domain I, interacts with DnaA modulators; sequence MMDAWPRCLE…GNGEVALAVG (76 aa). A domain II region spans residues 76–105; that stretch reads GSRPRAPEPAPAPVAATIAPQAAPIAPFAG. Positions 106 to 323 are domain III, AAA+ region; the sequence is NLDSHYTFAN…GALNTLVARA (218 aa). 4 residues coordinate ATP: glycine 151, glycine 153, lysine 154, and threonine 155. The interval 324–443 is domain IV, binds dsDNA; the sequence is NFTGRSITVE…WEKLIRKLSE (120 aa).

The protein belongs to the DnaA family. Oligomerizes as a right-handed, spiral filament on DNA at oriC.

It localises to the cytoplasm. Functionally, plays an essential role in the initiation and regulation of chromosomal replication. ATP-DnaA binds to the origin of replication (oriC) to initiate formation of the DNA replication initiation complex once per cell cycle. Binds the DnaA box (a 9 base pair repeat at the origin) and separates the double-stranded (ds)DNA. Forms a right-handed helical filament on oriC DNA; dsDNA binds to the exterior of the filament while single-stranded (ss)DNA is stabiized in the filament's interior. The ATP-DnaA-oriC complex binds and stabilizes one strand of the AT-rich DNA unwinding element (DUE), permitting loading of DNA polymerase. After initiation quickly degrades to an ADP-DnaA complex that is not apt for DNA replication. Binds acidic phospholipids. This is Chromosomal replication initiator protein DnaA from Xanthomonas oryzae pv. oryzae (strain KACC10331 / KXO85).